Here is a 222-residue protein sequence, read N- to C-terminus: Small ribosomal subunit protein uS3 (222 aa).

One can recognise a KH type-2 domain in the interval 39–108; sequence IRRHIKEKLY…TISLDIKEIK (70 aa).

This sequence belongs to the universal ribosomal protein uS3 family. As to quaternary structure, part of the 30S ribosomal subunit. Forms a tight complex with proteins S10 and S14.

Binds the lower part of the 30S subunit head. Binds mRNA in the 70S ribosome, positioning it for translation. The polypeptide is Small ribosomal subunit protein uS3 (Caldicellulosiruptor bescii (strain ATCC BAA-1888 / DSM 6725 / KCTC 15123 / Z-1320) (Anaerocellum thermophilum)).